We begin with the raw amino-acid sequence, 144 residues long: Probable 4-amino-4-deoxy-L-arabinose-phosphoundecaprenol flippase subunit ArnF (144 aa).

Residues 1-6 (MTHRRA) are Cytoplasmic-facing. A helical membrane pass occupies residues 7 to 24 (TLCAMASVALVSAAQLGM). The Periplasmic segment spans residues 25–56 (RWSMSRLPSPVQWLEMQEHAQLDLSALRVVCA). Residues 57-77 (SITAYALSMLFWLLALRVLPL) traverse the membrane as a helical segment. The Cytoplasmic segment spans residues 78–80 (SRA). A helical transmembrane segment spans residues 81–101 (YSLLSISYALVYTLAATLPFF). Residues 102–104 (HET) are Periplasmic-facing. A helical transmembrane segment spans residues 105–125 (FTVSKTVGVSLIVAGVLTINL). The Cytoplasmic segment spans residues 126–144 (RRLPRPSPQDLSHENQRFR).

The protein belongs to the ArnF family. In terms of assembly, heterodimer of ArnE and ArnF.

Its subcellular location is the cell inner membrane. It participates in bacterial outer membrane biogenesis; lipopolysaccharide biosynthesis. Its function is as follows. Translocates 4-amino-4-deoxy-L-arabinose-phosphoundecaprenol (alpha-L-Ara4N-phosphoundecaprenol) from the cytoplasmic to the periplasmic side of the inner membrane. This Pseudomonas syringae pv. syringae (strain B728a) protein is Probable 4-amino-4-deoxy-L-arabinose-phosphoundecaprenol flippase subunit ArnF.